The chain runs to 163 residues: MGVITSESEYVSSLSAEKLYRGIVEDGNIIYPKALPRFIEKAETLEGDGGPGTIKKLTFVGDFGSTKQHIDMVDRENCAYTYSVYEGIALSDQPLEKIVFEFKLVPTPEEGCIVKSTTKYYTKGDDIELSKDYLEAGIERFEGFTKAVESFLLANPDYNKDSN.

Kinetin contacts are provided by Q68 and Y82. The N(6)-dimethylallyladenine site is built by Q68 and Y82. Trans-zeatin-binding residues include Q68, Y82, and Y133.

This sequence belongs to the BetVI family. Homodimer. As to expression, expressed in nodules, but not in leaves, stems, flowers and roots. Specifically located in the nodule cortex.

Functionally, may be involved in nodule organogenesis rather in the processes related to nitrogen fixation or interactions with the bacteria. May regulate nodulation by controlling the levels of freely available cytokinins. In Medicago truncatula (Barrel medic), this protein is Nodulin-13 (N13).